A 251-amino-acid polypeptide reads, in one-letter code: Derlin-1 (251 aa).

Position 2 is an N-acetylserine (Ser2). At Ser2–Thr15 the chain is on the cytoplasmic side. The helical transmembrane segment at Arg16–Leu31 threads the bilayer. Residues Gly32–Gly69 are Lumenal-facing. Residues Phe70 to Gly89 form a helical membrane-spanning segment. Over Ala90–Arg94 the chain is Cytoplasmic. The helical transmembrane segment at Pro95 to Ala115 threads the bilayer. Topologically, residues Met116 to Met122 are lumenal. The helical transmembrane segment at Ile123–Asn137 threads the bilayer. Topologically, residues Arg138–Tyr154 are cytoplasmic. A helical transmembrane segment spans residues Leu155–Ile166. The Lumenal segment spans residues Gly167–Val170. Residues Ile171–Arg189 traverse the membrane as a helical segment. Over Tyr190–Gln251 the chain is Cytoplasmic. Ser201 is modified (phosphoserine). Residue Thr202 is modified to Phosphothreonine. Ser226 is subject to Phosphoserine. The tract at residues Arg229–Gln251 is disordered. Residues Asn241–Leu248 carry the SHP-box motif.

Belongs to the derlin family. In terms of assembly, homotetramer. The four subunits of the tetramer are arranged in a twofold symmetry. Forms homo- and heterooligomers with DERL2 and DERL3; binding to DERL3 is poorer than that between DERL2 and DERL3. Interacts (via SHP-box motif) with VCP. Interacts with AMFR, SELENOS, SEL1L, SELENOK and SYVN1, as well as with SEL1L-SYVN1 and VCP-SELENOS protein complexes; this interaction is weaker than that observed between DERL2 and these complexes. Interacts with NGLY1 and YOD1. Does not bind to EDEM1. Interacts with DNAJB9. Interacts with RNF103. Interacts with HM13. Interacts with XBP1 isoform 1 (via luminal/ectodomain domain); the interaction obviates the need for ectodomain shedding prior HM13/SPP-mediated XBP1 isoform 1 cleavage. Interacts with the signal recognition particle/SRP and the SRP receptor; in the process of endoplasmic reticulum stress-induced pre-emptive quality control. May interact with UBXN6. Interacts with ZFAND2B; probably through VCP. Interacts with CCDC47. Interacts with C18orf32. May interact with TRAM1. Forms a complex with SVIP and VCP/p97.

It localises to the endoplasmic reticulum membrane. Functionally, functional component of endoplasmic reticulum-associated degradation (ERAD) for misfolded lumenal proteins. Forms homotetramers which encircle a large channel traversing the endoplasmic reticulum (ER) membrane. This allows the retrotranslocation of misfolded proteins from the ER into the cytosol where they are ubiquitinated and degraded by the proteasome. The channel has a lateral gate within the membrane which provides direct access to membrane proteins with no need to reenter the ER lumen first. May mediate the interaction between VCP and the misfolded protein. Also involved in endoplasmic reticulum stress-induced pre-emptive quality control, a mechanism that selectively attenuates the translocation of newly synthesized proteins into the endoplasmic reticulum and reroutes them to the cytosol for proteasomal degradation. By controlling the steady-state expression of the IGF1R receptor, indirectly regulates the insulin-like growth factor receptor signaling pathway. The protein is Derlin-1 of Pongo abelii (Sumatran orangutan).